An 87-amino-acid polypeptide reads, in one-letter code: uncharacterized protein (87 aa).

Belongs to the YlmC/YmxH family.

This is an uncharacterized protein from Clostridium acetobutylicum (strain ATCC 824 / DSM 792 / JCM 1419 / IAM 19013 / LMG 5710 / NBRC 13948 / NRRL B-527 / VKM B-1787 / 2291 / W).